A 634-amino-acid polypeptide reads, in one-letter code: MHPEVSEPPVDSVAEPSLEESAGDHGDAGPGIRKEEISETKETCAGPCTTSCPSQQQPSGDNGSEGFCTHSRDDREDRGPRMTKQFLQKLCKQHKLYVTPALNDTLYLHFKGFDRIENLEEYTGLRCLWLECNGIQRIENLQAQSELRCLFLQVNLLHKIENLEPLQKLDALNLSNNYIKTIENLSCLPVLNTLQMAHNRLETVADIEHLRECLRLCVLDLSHNALSDPEILSVLESMPCLRVLNLMGNPVTKHIPNYRRTVTVRLKHLTYLDDRPVFPKDRACAEAWARGGYAAEKEERRQWESREHKKITDSLEALAMIKRRAEERKKARDRGETPLPDSEGSIPTSPEAEEKQPMGEIQKKMELFVEESFEAKDELFPETPGGEKELHVVVVNGAVENPDLSGSLAHNQTPVVVTPEESTSPVAATDGARTEDIEAVAVEIKERLFIDDLPDLEDAEGTDVSVEDQIKETDIPRIQAISSLSDDSDPELDELSLSTSEATPTGATGALSHIFAISKGPSTAATVPFTDICKPIATTDLESQGQDCGAAASRPLIQELNDEPAEEAANQPLPPQTCASDPALAHPSEDGDSDSQLPAATLLGDGAEDEAESSVHPKEPSTRVGLEDIEFGLD.

The segment at 1–80 is disordered; sequence MHPEVSEPPV…SRDDREDRGP (80 aa). The span at 22 to 42 shows a compositional bias: basic and acidic residues; the sequence is AGDHGDAGPGIRKEEISETKE. Residues 48 to 62 are compositionally biased toward polar residues; it reads CTTSCPSQQQPSGDN. A compositionally biased stretch (basic and acidic residues) spans 70-80; sequence HSRDDREDRGP. LRR repeat units follow at residues 101-123, 124-145, 146-167, 168-189, 190-211, and 215-236; these read ALND…EEYT, GLRC…QAQS, ELRC…EPLQ, KLDA…SCLP, VLNT…EHLR, and RLCV…SVLE. Residues 249–288 enclose the LRRCT domain; the sequence is NPVTKHIPNYRRTVTVRLKHLTYLDDRPVFPKDRACAEAW. Residues 326–336 show a composition bias toward basic and acidic residues; it reads EERKKARDRGE. Positions 326 to 358 are disordered; the sequence is EERKKARDRGETPLPDSEGSIPTSPEAEEKQPM. Residue S349 is modified to Phosphoserine. T462 is modified (phosphothreonine). Phosphoserine occurs at positions 465 and 488. Disordered stretches follow at residues 481-505 and 559-634; these read ISSL…ATPT and ELND…FGLD.

Belongs to the DNAAF1 family.

Its subcellular location is the cell projection. It localises to the cilium. In terms of biological role, cilium-specific protein required for the stability of the ciliary architecture. Plays a role in cytoplasmic preassembly of dynein arms. Involved in regulation of microtubule-based cilia and actin-based brush border microvilli. The sequence is that of Dynein axonemal assembly factor 1 (Dnaaf1) from Mus musculus (Mouse).